The sequence spans 305 residues: Oxygen-dependent coproporphyrinogen-III oxidase (305 aa).

S97 is a binding site for substrate. H101 and H111 together coordinate a divalent metal cation. Residue H111 is the Proton donor of the active site. 113-115 (NVR) contributes to the substrate binding site. H150 and H180 together coordinate a divalent metal cation. The segment at 245-280 (YVEFNLVWDRGTHFGLQSGGRTESILLSMPPLASWA) is important for dimerization. A substrate-binding site is contributed by 263–265 (GGR).

The protein belongs to the aerobic coproporphyrinogen-III oxidase family. Homodimer. A divalent metal cation is required as a cofactor.

Its subcellular location is the cytoplasm. It carries out the reaction coproporphyrinogen III + O2 + 2 H(+) = protoporphyrinogen IX + 2 CO2 + 2 H2O. It functions in the pathway porphyrin-containing compound metabolism; protoporphyrin-IX biosynthesis; protoporphyrinogen-IX from coproporphyrinogen-III (O2 route): step 1/1. In terms of biological role, involved in the heme biosynthesis. Catalyzes the aerobic oxidative decarboxylation of propionate groups of rings A and B of coproporphyrinogen-III to yield the vinyl groups in protoporphyrinogen-IX. The sequence is that of Oxygen-dependent coproporphyrinogen-III oxidase from Variovorax paradoxus (strain S110).